A 411-amino-acid polypeptide reads, in one-letter code: Anaerobic sulfatase-maturating enzyme homolog AslB (411 aa).

The Radical SAM core domain maps to 3–250; the sequence is QQVPTRAFHV…LVAIFDHWIK (248 aa). [4Fe-4S] cluster is bound by residues Cys21 and Cys25. Residue Tyr27 coordinates S-adenosyl-L-methionine. [4Fe-4S] cluster is bound at residue Cys28. 3 residues coordinate S-adenosyl-L-methionine: Gly74, Ser129, and Arg141. Residues Cys276, Cys282, and Cys297 each coordinate [4Fe-4S] cluster. The active-site Proton acceptor is Asp298. Positions 339, 342, 348, 352, and 371 each coordinate [4Fe-4S] cluster.

It belongs to the radical SAM superfamily. Anaerobic sulfatase-maturating enzyme family. It depends on [4Fe-4S] cluster as a cofactor.

This is Anaerobic sulfatase-maturating enzyme homolog AslB (aslB) from Escherichia coli (strain K12).